A 460-amino-acid chain; its full sequence is Argininosuccinate lyase (460 aa).

It belongs to the lyase 1 family. Argininosuccinate lyase subfamily.

It localises to the cytoplasm. The catalysed reaction is 2-(N(omega)-L-arginino)succinate = fumarate + L-arginine. It functions in the pathway amino-acid biosynthesis; L-arginine biosynthesis; L-arginine from L-ornithine and carbamoyl phosphate: step 3/3. The protein is Argininosuccinate lyase of Nitratidesulfovibrio vulgaris (strain DSM 19637 / Miyazaki F) (Desulfovibrio vulgaris).